Consider the following 473-residue polypeptide: MDMPPTPLPPETANTSPAPNGATAGIRVENCYVFKSRLQEYAQKAGLQTPEYHTFKEGPSHEPVFKSTVVINNTSYDSLPGFFNRKAAEQSAAEVALMEIVKSIPANANIPAVQETGLCKNLLQEYAQKMNYAIPSYICTKSASGLAPFICTVEIGGIQYIGAAARTKKDAEIKAARTALLAIQGQSEGSANGATKYIVVPGKRVGKEVEKMPIETPKPLKIKKGGFKKKWNKRKFMKKDGQAVVEKDEARVAGDAHDSDVLMQPTVITQEASCGTLFLQPCEEAKRVEAEPPRDIEMVQPDKENQHSDAALVQPDDEARVEQEPSRDISVVPPNEEAISVKQEPSIDAAILQPKEEASSVKQEPFIDTAMLQACKEAGSVELGPARDTVISQLNEQDRGVKQEPAGDTAVPQPDVDARVVKEESPRTEPNGEATNMKETPKNSAVCNSPETKEFGDITAMGSDPPATNMSEE.

Residues 1–10 (MDMPPTPLPP) show a composition bias toward pro residues. Residues 1 to 22 (MDMPPTPLPPETANTSPAPNGA) are disordered. 2 DRBM domains span residues 33-102 (VFKS…EIVK) and 118-185 (LCKN…AIQG). 3 stretches are compositionally biased toward basic and acidic residues: residues 286-307 (KRVE…ENQH), 317-327 (DEARVEQEPSR), and 416-427 (VDARVVKEESPR). 2 disordered regions span residues 286-329 (KRVE…SRDI) and 393-473 (QLNE…MSEE). Residues 433–450 (EATNMKETPKNSAVCNSP) show a composition bias toward polar residues.

Functionally, binds double-stranded RNA. The polypeptide is Double-stranded RNA-binding protein 7 (DRB7) (Oryza sativa subsp. japonica (Rice)).